The chain runs to 355 residues: Uroporphyrinogen decarboxylase (355 aa).

Residues 23 to 27, Asp72, Tyr148, Ser203, and His321 contribute to the substrate site; that span reads RQAGR.

Belongs to the uroporphyrinogen decarboxylase family. As to quaternary structure, homodimer.

It localises to the cytoplasm. The enzyme catalyses uroporphyrinogen III + 4 H(+) = coproporphyrinogen III + 4 CO2. Its pathway is porphyrin-containing compound metabolism; protoporphyrin-IX biosynthesis; coproporphyrinogen-III from 5-aminolevulinate: step 4/4. In terms of biological role, catalyzes the decarboxylation of four acetate groups of uroporphyrinogen-III to yield coproporphyrinogen-III. This is Uroporphyrinogen decarboxylase from Chloroflexus aurantiacus (strain ATCC 29366 / DSM 635 / J-10-fl).